Reading from the N-terminus, the 82-residue chain is DinI-like protein (82 aa).

It belongs to the DinI family.

The protein is DinI-like protein of Enterobacteria phage VT1-Sakai.